A 374-amino-acid chain; its full sequence is Heme A synthase (374 aa).

The next 8 membrane-spanning stretches (helical) occupy residues 22-42 (VAVW…IGAI), 107-127 (LWGR…WVRG), 135-155 (PTLA…WFMV), 172-192 (LHLG…LGLL), 209-229 (AWAA…VAGI), 265-285 (AAVQ…VLSL), 306-326 (AAAT…VVWI), and 327-347 (PLAT…VWTL). Histidine 271 serves as a coordination point for heme. Histidine 332 contributes to the heme binding site.

Belongs to the COX15/CtaA family. Type 2 subfamily. Interacts with CtaB. The cofactor is heme b.

Its subcellular location is the cell membrane. It carries out the reaction Fe(II)-heme o + 2 A + H2O = Fe(II)-heme a + 2 AH2. The protein operates within porphyrin-containing compound metabolism; heme A biosynthesis; heme A from heme O: step 1/1. Functionally, catalyzes the conversion of heme O to heme A by two successive hydroxylations of the methyl group at C8. The first hydroxylation forms heme I, the second hydroxylation results in an unstable dihydroxymethyl group, which spontaneously dehydrates, resulting in the formyl group of heme A. The chain is Heme A synthase from Rhodospirillum centenum (strain ATCC 51521 / SW).